The following is a 405-amino-acid chain: Argininosuccinate synthase (405 aa).

Residues 10-18 (AYSGGVDTS) and Ala38 each bind ATP. Tyr89 is an L-citrulline binding site. Gly119 serves as a coordination point for ATP. L-aspartate is bound by residues Thr121, Asn125, and Asp126. An L-citrulline-binding site is contributed by Asn125. L-citrulline is bound by residues Arg129, Ser177, Ser186, Glu262, and Tyr274.

The protein belongs to the argininosuccinate synthase family. Type 1 subfamily. Homotetramer.

Its subcellular location is the cytoplasm. The enzyme catalyses L-citrulline + L-aspartate + ATP = 2-(N(omega)-L-arginino)succinate + AMP + diphosphate + H(+). Its pathway is amino-acid biosynthesis; L-arginine biosynthesis; L-arginine from L-ornithine and carbamoyl phosphate: step 2/3. The protein is Argininosuccinate synthase of Synechococcus sp. (strain RCC307).